The chain runs to 599 residues: Putative sensor histidine kinase NtrY-like (599 aa).

The next 4 helical transmembrane spans lie at 17–37, 44–64, 85–105, and 285–305; these read ILILALAIASIISVCTTFYVI, FSTIIGFLLIDLAIFLILGIL, IVIAFSLVAAIPTIIVSVFSV, and IMFIFIALLLLFVAINFGVLF. The 55-residue stretch at 307-361 folds into the HAMP domain; it reads AKIVKPIKKLVTATDKVKDGDLTVQVPENEVDKDEIGTLYAAFNRMIKQLSRQQR. The region spanning 378-589 is the Histidine kinase domain; it reads KVAHEIKNPL…IIDIKFDLKE (212 aa). The residue at position 381 (histidine 381) is a Phosphohistidine; by autocatalysis.

The protein resides in the cell membrane. The enzyme catalyses ATP + protein L-histidine = ADP + protein N-phospho-L-histidine.. In terms of biological role, member of the two-component regulatory system RP614/RP562. This chain is Putative sensor histidine kinase NtrY-like, found in Rickettsia prowazekii (strain Madrid E).